The sequence spans 100 residues: uncharacterized protein (100 aa).

Its subcellular location is the secreted. This is an uncharacterized protein from Mycobacterium leprae (strain TN).